The sequence spans 416 residues: Exodeoxyribonuclease 7 large subunit (416 aa).

Belongs to the XseA family. Heterooligomer composed of large and small subunits.

The protein resides in the cytoplasm. The enzyme catalyses Exonucleolytic cleavage in either 5'- to 3'- or 3'- to 5'-direction to yield nucleoside 5'-phosphates.. Bidirectionally degrades single-stranded DNA into large acid-insoluble oligonucleotides, which are then degraded further into small acid-soluble oligonucleotides. This is Exodeoxyribonuclease 7 large subunit from Nitratiruptor sp. (strain SB155-2).